Consider the following 103-residue polypeptide: Thioredoxin (103 aa).

In terms of domain architecture, Thioredoxin spans 1 to 103 (MVKEITDATF…ELDEVINKYV (103 aa)). An intrachain disulfide couples Cys-28 to Cys-31.

It belongs to the thioredoxin family.

Component of the thioredoxin-thioredoxin reductase system. Participates in various redox reactions through the reversible oxidation of its active center dithiol to a disulfide and catalyzes dithiol-disulfide exchange reactions. This Listeria innocua serovar 6a (strain ATCC BAA-680 / CLIP 11262) protein is Thioredoxin (trxA).